The primary structure comprises 317 residues: Transaldolase (317 aa).

K132 (schiff-base intermediate with substrate) is an active-site residue.

Belongs to the transaldolase family. Type 1 subfamily. In terms of assembly, homodimer.

The protein resides in the cytoplasm. The catalysed reaction is D-sedoheptulose 7-phosphate + D-glyceraldehyde 3-phosphate = D-erythrose 4-phosphate + beta-D-fructose 6-phosphate. It participates in carbohydrate degradation; pentose phosphate pathway; D-glyceraldehyde 3-phosphate and beta-D-fructose 6-phosphate from D-ribose 5-phosphate and D-xylulose 5-phosphate (non-oxidative stage): step 2/3. Functionally, transaldolase is important for the balance of metabolites in the pentose-phosphate pathway. The polypeptide is Transaldolase (Shewanella frigidimarina (strain NCIMB 400)).